We begin with the raw amino-acid sequence, 178 residues long: MADLATIARPYAEALFQSAKPAELAGCLEQLNELAQLAALPEVAALSNNPKVSADDLSKLLSGMVKTKLDPKVASFLNLVNQNHRLVAVPEIAHQFEAMKNKSEGAAEVNITSAFPLEGSALNDLLSSLKKRFGGKELRPTIQVDPTLIGGVRIQVGDEVMDSSVKVQLAQMQASLGA.

Belongs to the ATPase delta chain family. In terms of assembly, F-type ATPases have 2 components, F(1) - the catalytic core - and F(0) - the membrane proton channel. F(1) has five subunits: alpha(3), beta(3), gamma(1), delta(1), epsilon(1). F(0) has three main subunits: a(1), b(2) and c(10-14). The alpha and beta chains form an alternating ring which encloses part of the gamma chain. F(1) is attached to F(0) by a central stalk formed by the gamma and epsilon chains, while a peripheral stalk is formed by the delta and b chains.

The protein localises to the cell inner membrane. Functionally, f(1)F(0) ATP synthase produces ATP from ADP in the presence of a proton or sodium gradient. F-type ATPases consist of two structural domains, F(1) containing the extramembraneous catalytic core and F(0) containing the membrane proton channel, linked together by a central stalk and a peripheral stalk. During catalysis, ATP synthesis in the catalytic domain of F(1) is coupled via a rotary mechanism of the central stalk subunits to proton translocation. Its function is as follows. This protein is part of the stalk that links CF(0) to CF(1). It either transmits conformational changes from CF(0) to CF(1) or is implicated in proton conduction. This Polynucleobacter necessarius subsp. necessarius (strain STIR1) protein is ATP synthase subunit delta.